Consider the following 881-residue polypeptide: Serine/threonine-protein kinase/endoribonuclease IRE1b (881 aa).

A signal peptide spans 1-21; it reads MRGSALLDLILFLLVSPLAHS. At 22–357 the chain is on the lumenal side; that stretch reads FKGSEISKFY…KQAGFASKFS (336 aa). Residue Asn115 is glycosylated (N-linked (GlcNAc...) asparagine). Residues 358–378 form a helical membrane-spanning segment; it reads GLIVLIFGFCVTMLSVCGLFF. Over 379 to 881 the chain is Cytoplasmic; sequence YRLRQSIRIK…FFKYSKTTVF (503 aa). The 286-residue stretch at 459 to 744 folds into the Protein kinase domain; the sequence is FVSNKEIAKG…AQDVMHHPLF (286 aa). ATP-binding positions include 465-473 and Lys487; that span reads IAKGSNGTV. The ATP selon article stretch occupies residues 481 to 502; it reads GRLVAVKRLVQSHHDVAQKEIL. The Proton acceptor role is filled by Asp608. Positions 642–661 are disordered; sequence LTRNSTGLGSGSSGWQAPEQ. The 132-residue stretch at 747 to 878 folds into the KEN domain; sequence SDMRLSFLRD…EEFFFKYSKT (132 aa).

It belongs to the protein kinase superfamily. Ser/Thr protein kinase family. In terms of assembly, homodimer; disulfide-linked. Dimer formation is driven by hydrophobic interactions within the N-terminal luminal domains and stabilized by disulfide bridges. Mg(2+) is required as a cofactor. In terms of processing, autophosphorylated. In terms of tissue distribution, ubiquitous. Detected in the apical meristem, at leaf margins where vascular bundles end, in the anthers before pollen is formed and in the ovules at a very early stage of development. There is no expression in more mature embryos. Also strongly expressed in the cotyledons immediately after germination but not later on.

It localises to the endoplasmic reticulum membrane. The catalysed reaction is L-seryl-[protein] + ATP = O-phospho-L-seryl-[protein] + ADP + H(+). It catalyses the reaction L-threonyl-[protein] + ATP = O-phospho-L-threonyl-[protein] + ADP + H(+). The kinase domain is activated by trans-autophosphorylation. Kinase activity is required for activation of the endoribonuclease domain. Its function is as follows. Senses unfolded proteins in the lumen of the endoplasmic reticulum via its N-terminal domain which leads to enzyme auto-activation. The active endoribonuclease domain splices bZIP60 mRNA to generate a new C-terminus, converting it into a potent unfolded-protein response transcriptional activator which then induces transcription of UPR target genes. Involved in organ growth regulation. Plays a role in plant immunity and abiotic stress responses. Required for ER stress-induced autophagy. In Arabidopsis thaliana (Mouse-ear cress), this protein is Serine/threonine-protein kinase/endoribonuclease IRE1b (IRE1B).